We begin with the raw amino-acid sequence, 223 residues long: Golgi to ER traffic protein 1 (223 aa).

Position 1 (methionine 1) is a topological domain, lumenal. A helical transmembrane segment spans residues 2–21 (SWVVAIAVVFVVVLKVLEYS). At 22 to 105 (TSYHDLVLQS…QIKGHLKKVK (84 aa)) the chain is on the cytoplasmic side. A coiled-coil region spans residues 56 to 105 (ENKSISAQDNYAKWTKNNRKLDKLDKEITELGAQLKAHNEQIKGHLKKVK). The helical transmembrane segment at 106 to 126 (LLLLTVPFLCFKLWKGKHIVY) threads the bilayer. Residues 127-177 (NLPHHQMFPQLVAGVWSQGWLYLAILPLQLAKSIVTGSSFAIETASFPHMG) lie on the Lumenal side of the membrane. Residues 178 to 194 (VSLGIWLWALNSVISNI) traverse the membrane as a helical segment. The Cytoplasmic portion of the chain corresponds to 195–223 (EFMTMQLWAKPVSKPSKKLEIVTDEIKVD).

The protein belongs to the WRB/GET1 family. In terms of assembly, component of the Golgi to ER traffic (GET) complex, which is composed of GET1, GET2 and GET3. Within the complex, GET1 and GET2 form a heterotetramer which is stabilized by phosphatidylinositol binding and which binds to the GET3 homodimer.

The protein localises to the endoplasmic reticulum membrane. Its subcellular location is the golgi apparatus membrane. Functionally, required for the post-translational delivery of tail-anchored (TA) proteins to the endoplasmic reticulum. Together with GET2, acts as a membrane receptor for soluble GET3, which recognizes and selectively binds the transmembrane domain of TA proteins in the cytosol. The GET complex cooperates with the HDEL receptor ERD2 to mediate the ATP-dependent retrieval of resident ER proteins that contain a C-terminal H-D-E-L retention signal from the Golgi to the ER. The protein is Golgi to ER traffic protein 1 of Candida glabrata (strain ATCC 2001 / BCRC 20586 / JCM 3761 / NBRC 0622 / NRRL Y-65 / CBS 138) (Yeast).